The chain runs to 170 residues: Acetyl-CoA decarbonylase/synthase complex subunit epsilon 1 (170 aa).

Belongs to the CdhB family. Heterotetramer of two alpha and two epsilon subunits. The ACDS complex is made up of alpha, epsilon, beta, gamma and delta subunits with a probable stoichiometry of (alpha(2)epsilon(2))(4)-beta(8)-(gamma(1)delta(1))(8).

Its pathway is one-carbon metabolism; methanogenesis from acetate. Part of a complex that catalyzes the reversible cleavage of acetyl-CoA, allowing growth on acetate as sole source of carbon and energy. The alpha-epsilon subcomponent functions as a carbon monoxide dehydrogenase. The precise role of the epsilon subunit is unclear; it may have a stabilizing role within the alpha(2)epsilon(2) component and/or be involved in electron transfer to FAD during a potential FAD-mediated CO oxidation. This Methanosarcina thermophila protein is Acetyl-CoA decarbonylase/synthase complex subunit epsilon 1 (cdhB1).